Consider the following 199-residue polypeptide: NAD(P)H dehydrogenase (quinone) (199 aa).

A Flavodoxin-like domain is found at 4–190; sequence VLVLYYSTYG…AGARHQGELV (187 aa). FMN contacts are provided by residues 10–15 and 78–80; these read STYGHL and TRF. Tyr-12 serves as a coordination point for NAD(+). Position 98 (Trp-98) interacts with substrate. Residues 113–119 and His-134 contribute to the FMN site; that span reads STATQHG.

Belongs to the WrbA family. Requires FMN as cofactor.

The catalysed reaction is a quinone + NADH + H(+) = a quinol + NAD(+). The enzyme catalyses a quinone + NADPH + H(+) = a quinol + NADP(+). This Azorhizobium caulinodans (strain ATCC 43989 / DSM 5975 / JCM 20966 / LMG 6465 / NBRC 14845 / NCIMB 13405 / ORS 571) protein is NAD(P)H dehydrogenase (quinone).